The sequence spans 561 residues: CWF19-like protein mug161 (561 aa).

Residues 286-338 form a disordered region; that stretch reads QQTNKFHKSKSSTALFKSKKDSSSSLNKMHKSESHSALNNLHKSESGTSLNNR. Residue Ser-296 is modified to Phosphoserine. Phosphothreonine is present on Thr-298. Residues Ser-317, Ser-319, Ser-331, and Ser-334 each carry the phosphoserine modification. Residues 320 to 337 are compositionally biased toward polar residues; sequence HSALNNLHKSESGTSLNN.

The protein belongs to the CWF19 family.

The protein resides in the nucleus. Has a role in meiosis. This chain is CWF19-like protein mug161 (mug161), found in Schizosaccharomyces pombe (strain 972 / ATCC 24843) (Fission yeast).